A 262-amino-acid chain; its full sequence is F-actin-capping protein subunit alpha (262 aa).

Belongs to the F-actin-capping protein alpha subunit family. In terms of assembly, heterodimer of an alpha and a beta subunit.

It localises to the cytoplasm. Its subcellular location is the cytoskeleton. Its function is as follows. F-actin-capping proteins bind in a Ca(2+)-independent manner to the fast growing ends of actin filaments (barbed end) thereby blocking the exchange of subunits at these ends. Unlike other capping proteins (such as gelsolin and severin), these proteins do not sever actin filaments. This Yarrowia lipolytica (strain CLIB 122 / E 150) (Yeast) protein is F-actin-capping protein subunit alpha (CAP1).